Here is a 423-residue protein sequence, read N- to C-terminus: Glucose-1-phosphate adenylyltransferase (423 aa).

Alpha-D-glucose 1-phosphate contacts are provided by residues Y98, G163, 178–179 (EK), and S189.

Belongs to the bacterial/plant glucose-1-phosphate adenylyltransferase family. As to quaternary structure, homotetramer.

The catalysed reaction is alpha-D-glucose 1-phosphate + ATP + H(+) = ADP-alpha-D-glucose + diphosphate. It participates in glycan biosynthesis; glycogen biosynthesis. Involved in the biosynthesis of ADP-glucose, a building block required for the elongation reactions to produce glycogen. Catalyzes the reaction between ATP and alpha-D-glucose 1-phosphate (G1P) to produce pyrophosphate and ADP-Glc. This Thermotoga neapolitana (strain ATCC 49049 / DSM 4359 / NBRC 107923 / NS-E) protein is Glucose-1-phosphate adenylyltransferase.